The following is a 438-amino-acid chain: Transposon Ty2-C Gag polyprotein (438 aa).

3 stretches are compositionally biased toward polar residues: residues 1 to 11 (MESQQLHQNPR), 19 to 39 (ASVTSKEVPSNQDPLAVSASN), and 49 to 60 (KVNSQQETTPGT). Disordered regions lie at residues 1-88 (MESQ…YQQH), 365-397 (NVSRTSPNTTNTKVTTRNYQRTNSSKPRAAKAH), and 419-438 (SSQYLSDDNELSLRPATERI). An RNA-binding region spans residues 295 to 397 (ENNINVSDRL…SSKPRAAKAH (103 aa)). The span at 369–382 (TSPNTTNTKVTTRN) shows a compositional bias: low complexity.

As to quaternary structure, homotrimer.

The protein localises to the cytoplasm. Functionally, capsid protein (CA) is the structural component of the virus-like particle (VLP), forming the shell that encapsulates the retrotransposons dimeric RNA genome. The particles are assembled from trimer-clustered units and there are holes in the capsid shells that allow for the diffusion of macromolecules. CA also has nucleocapsid-like chaperone activity, promoting primer tRNA(i)-Met annealing to the multipartite primer-binding site (PBS), dimerization of Ty2 RNA and initiation of reverse transcription. The sequence is that of Transposon Ty2-C Gag polyprotein (TY2A-C) from Saccharomyces cerevisiae (strain ATCC 204508 / S288c) (Baker's yeast).